The sequence spans 198 residues: Interferon gamma (198 aa).

Residues 1–23 (MMVSTARAVVCLSLCLCVCQVRG) form the signal peptide. N31, N42, and N174 each carry an N-linked (GlcNAc...) asparagine glycan. Positions 173–198 (SNNTKMQRRRRRRRRQARKVKTPTRA) are disordered. Over residues 178–198 (MQRRRRRRRRQARKVKTPTRA) the composition is skewed to basic residues.

Belongs to the type II (or gamma) interferon family. Homodimer.

Its subcellular location is the secreted. Its function is as follows. Cytokine which binds to interferon gamma receptor 1 (ifngr1). Also binds with lower affinity to interferon gamma receptor 1-like (ifngr1l). Has activating effects on macrophages and neutrophils. This is Interferon gamma from Paralichthys olivaceus (Bastard halibut).